We begin with the raw amino-acid sequence, 234 residues long: 7-carboxy-7-deazaguanine synthase (234 aa).

Residues 36-38 (IQG) and R51 contribute to the substrate site. The 193-residue stretch at 42–234 (FVGYPSIFIR…LQTHKFLGIE (193 aa)) folds into the Radical SAM core domain. 3 residues coordinate [4Fe-4S] cluster: C55, C59, and C62. Mg(2+) is bound at residue T64. Residue T100 coordinates substrate. S-adenosyl-L-methionine is bound by residues G102, 144–146 (SPK), and 195–198 (QSMD).

Belongs to the radical SAM superfamily. 7-carboxy-7-deazaguanine synthase family. Homodimer. [4Fe-4S] cluster is required as a cofactor. It depends on S-adenosyl-L-methionine as a cofactor. The cofactor is Mg(2+).

The catalysed reaction is 6-carboxy-5,6,7,8-tetrahydropterin + H(+) = 7-carboxy-7-deazaguanine + NH4(+). The protein operates within purine metabolism; 7-cyano-7-deazaguanine biosynthesis. Catalyzes the complex heterocyclic radical-mediated conversion of 6-carboxy-5,6,7,8-tetrahydropterin (CPH4) to 7-carboxy-7-deazaguanine (CDG), a step common to the biosynthetic pathways of all 7-deazapurine-containing compounds. This Rickettsia prowazekii (strain Madrid E) protein is 7-carboxy-7-deazaguanine synthase.